The sequence spans 873 residues: MAFQSPLTFNDEQLTVAQLKSQLDLFANAQKQAFLNHHPVTDLVLSRAEYMDLLLTRLWRYYGFSEIHNISLVAVGGYGRGELHPLSDIDILVLSKHKLPGELETKLSEFITLLWDLRLEVGHAVRTVEECAAIGREDLTVATNLQEARLLCGSENTFQDLKKVVLSDSFWPSETFYRAKIQEQRERHARYHDTTYNLEPDIKSTPGGLRDIHTLSWVARRHFGATSLLEMSRYGFLTDAEYRELVECQDFLWRVRFALHIELKRYDNRLTFAHQIQVAEHLGFKGEGNRGIEMMMKEFYRTLRRVAELNKMLLKLFDQAIINGGETEPAVIINEDFQRRGRLIEARKPALFQARPETILDMFLHIANDSTIDSVSPPTLRQLRTARRRLNKFLHTIPEAREKFMELVRHPNALHRAFSLMHKLGVLAAYLPQWSQIVGQMQFDLFHVYTVDEHSVRLLNHINTFSYAKNHDKHPICCEVYPRLQKKELLLLAAIFHDIGKGRGGDHSEIGEKEAYDFCIEHGLSKPEAKLVSWLVRHHLLMSVTAQRRDIYDPEVITEFAKQVRDEERLEYLVCLTVADICATNPELWNSWKRTLLAELFYSTQRALRRGLENPVDVRERIRHNQQLASALLRKEGFTAREIEVLWQRFKADYFLRHTHKQIAWHCEHILRMDNPEQPLVLMSKKATRGGTEVFVYTKDQHALFATVVAELDRRNFNVHDAQIMSSKDGYVLDTFMVLDQHGQAIDVDNHKAVIKHLMHVLTDGRPTKVKTRRTPYKLQHFKVKTKVDFLPTKSKKRTLMELVALDTPGLLAITGATFADMGFNLHGAKITTIGERAEDLFILTSENGGRLSEEQELQLREKLIHNIAELAP.

Residues methionine 1–isoleucine 332 are uridylyltransferase. The tract at residues isoleucine 333–threonine 692 is uridylyl-removing. Residues valine 451–leucine 573 form the HD domain. ACT domains are found at residues glutamate 693 to arginine 773 and leucine 800 to proline 873.

The protein belongs to the GlnD family. Mg(2+) is required as a cofactor.

It carries out the reaction [protein-PII]-L-tyrosine + UTP = [protein-PII]-uridylyl-L-tyrosine + diphosphate. It catalyses the reaction [protein-PII]-uridylyl-L-tyrosine + H2O = [protein-PII]-L-tyrosine + UMP + H(+). Its activity is regulated as follows. Uridylyltransferase (UTase) activity is inhibited by glutamine, while glutamine activates uridylyl-removing (UR) activity. Its function is as follows. Modifies, by uridylylation and deuridylylation, the PII regulatory proteins (GlnB and homologs), in response to the nitrogen status of the cell that GlnD senses through the glutamine level. Under low glutamine levels, catalyzes the conversion of the PII proteins and UTP to PII-UMP and PPi, while under higher glutamine levels, GlnD hydrolyzes PII-UMP to PII and UMP (deuridylylation). Thus, controls uridylylation state and activity of the PII proteins, and plays an important role in the regulation of nitrogen assimilation and metabolism. In Vibrio vulnificus (strain YJ016), this protein is Bifunctional uridylyltransferase/uridylyl-removing enzyme.